Here is a 323-residue protein sequence, read N- to C-terminus: Probable oxidoreductase patJ (323 aa).

Residues 291-323 (DQSANGVNGHATGVEAKKKQLGDMTRRRSGAQE) form a disordered region. Residues 305-316 (EAKKKQLGDMTR) are compositionally biased toward basic and acidic residues.

This sequence belongs to the oxidoreductase OpS7 family.

It localises to the vacuole lumen. Its subcellular location is the cytoplasmic vesicle lumen. It functions in the pathway mycotoxin biosynthesis; patulin biosynthesis. Functionally, probable oxidoreductase; part of the gene cluster that mediates the biosynthesis of patulin, an acetate-derived tetraketide mycotoxin produced by several fungal species that shows antimicrobial properties against several bacteria. PatJ acts with patO in the vacuole to convert gentisyl alcohol to isoepoxydon. The pathway begins with the synthesis of 6-methylsalicylic acid by the polyketide synthase (PKS) patK via condensation of acetate and malonate units. The 6-methylsalicylic acid decarboxylase patG then catalyzes the decarboxylation of 6-methylsalicylic acid to yield m-cresol (also known as 3-methylphenol). These first reactions occur in the cytosol. The intermediate m-cresol is then transported into the endoplasmic reticulum where the cytochrome P450 monooxygenase patH converts it to m-hydroxybenzyl alcohol, which is further converted to gentisyl alcohol by the cytochrome P450 monooxygenase patI. The oxidoreductases patJ and patO further convert gentisyl alcohol to isoepoxydon in the vacuole. PatN catalyzes then the transformation of isoepoxydon into phyllostine. The cluster protein patF is responsible for the conversion from phyllostine to neopatulin whereas the alcohol dehydrogenase patD converts neopatulin to E-ascladiol. The steps between isoepoxydon and E-ascladiol occur in the cytosol, and E-ascladiol is probably secreted to the extracellular space by one of the cluster-specific transporters patC or patM. Finally, the secreted patulin synthase patE catalyzes the conversion of E-ascladiol to patulin. The chain is Probable oxidoreductase patJ from Aspergillus clavatus (strain ATCC 1007 / CBS 513.65 / DSM 816 / NCTC 3887 / NRRL 1 / QM 1276 / 107).